Here is a 242-residue protein sequence, read N- to C-terminus: Small ribosomal subunit protein uS3 (242 aa).

The 72-residue stretch at 39–110 (IRKFIHKKYG…QVRINVVEVE (72 aa)) folds into the KH type-2 domain. Positions 221–242 (GASPRRRASRRPQQFEDRSNEG) are disordered. The segment covering 233–242 (QQFEDRSNEG) has biased composition (basic and acidic residues).

This sequence belongs to the universal ribosomal protein uS3 family. In terms of assembly, part of the 30S ribosomal subunit. Forms a tight complex with proteins S10 and S14.

Binds the lower part of the 30S subunit head. Binds mRNA in the 70S ribosome, positioning it for translation. This chain is Small ribosomal subunit protein uS3, found in Parasynechococcus marenigrum (strain WH8102).